A 125-amino-acid chain; its full sequence is Aspartate 1-decarboxylase (125 aa).

Serine 25 (schiff-base intermediate with substrate; via pyruvic acid) is an active-site residue. Serine 25 carries the post-translational modification Pyruvic acid (Ser). A substrate-binding site is contributed by threonine 57. The Proton donor role is filled by tyrosine 58. Position 71–73 (71–73) interacts with substrate; the sequence is GAA.

Belongs to the PanD family. Heterooctamer of four alpha and four beta subunits. Requires pyruvate as cofactor. Post-translationally, is synthesized initially as an inactive proenzyme, which is activated by self-cleavage at a specific serine bond to produce a beta-subunit with a hydroxyl group at its C-terminus and an alpha-subunit with a pyruvoyl group at its N-terminus.

The protein localises to the cytoplasm. It carries out the reaction L-aspartate + H(+) = beta-alanine + CO2. It participates in cofactor biosynthesis; (R)-pantothenate biosynthesis; beta-alanine from L-aspartate: step 1/1. Functionally, catalyzes the pyruvoyl-dependent decarboxylation of aspartate to produce beta-alanine. This is Aspartate 1-decarboxylase from Hydrogenobaculum sp. (strain Y04AAS1).